Here is a 502-residue protein sequence, read N- to C-terminus: Probable cytosol aminopeptidase (502 aa).

Residues Lys-254 and Asp-259 each coordinate Mn(2+). Lys-266 is an active-site residue. Mn(2+) is bound by residues Asp-277, Asp-336, and Glu-338. Arg-340 is a catalytic residue.

Belongs to the peptidase M17 family. It depends on Mn(2+) as a cofactor.

Its subcellular location is the cytoplasm. The catalysed reaction is Release of an N-terminal amino acid, Xaa-|-Yaa-, in which Xaa is preferably Leu, but may be other amino acids including Pro although not Arg or Lys, and Yaa may be Pro. Amino acid amides and methyl esters are also readily hydrolyzed, but rates on arylamides are exceedingly low.. It catalyses the reaction Release of an N-terminal amino acid, preferentially leucine, but not glutamic or aspartic acids.. In terms of biological role, presumably involved in the processing and regular turnover of intracellular proteins. Catalyzes the removal of unsubstituted N-terminal amino acids from various peptides. The sequence is that of Probable cytosol aminopeptidase from Tropheryma whipplei (strain TW08/27) (Whipple's bacillus).